A 396-amino-acid chain; its full sequence is 1-deoxy-D-xylulose 5-phosphate reductoisomerase (396 aa).

Positions 15, 16, 18, and 127 each coordinate NADPH. Lys-128 is a binding site for 1-deoxy-D-xylulose 5-phosphate. Glu-129 lines the NADPH pocket. A Mn(2+)-binding site is contributed by Asp-153. 1-deoxy-D-xylulose 5-phosphate is bound by residues Ser-154, Glu-155, Ser-177, and His-200. Residue Glu-155 coordinates Mn(2+). Gly-206 is a binding site for NADPH. 1-deoxy-D-xylulose 5-phosphate is bound by residues Ser-213, Asn-218, Lys-219, and Glu-222. Residue Glu-222 coordinates Mn(2+).

Belongs to the DXR family. Mg(2+) is required as a cofactor. It depends on Mn(2+) as a cofactor.

It catalyses the reaction 2-C-methyl-D-erythritol 4-phosphate + NADP(+) = 1-deoxy-D-xylulose 5-phosphate + NADPH + H(+). It functions in the pathway isoprenoid biosynthesis; isopentenyl diphosphate biosynthesis via DXP pathway; isopentenyl diphosphate from 1-deoxy-D-xylulose 5-phosphate: step 1/6. In terms of biological role, catalyzes the NADPH-dependent rearrangement and reduction of 1-deoxy-D-xylulose-5-phosphate (DXP) to 2-C-methyl-D-erythritol 4-phosphate (MEP). The protein is 1-deoxy-D-xylulose 5-phosphate reductoisomerase of Anaplasma marginale (strain Florida).